A 319-amino-acid polypeptide reads, in one-letter code: MKPENKSPVLDLISAGMKTVVNTLQPDLPPWPATGTIAEQRQYYTLERRFWNAGAPEMATRAYMVPTKYGQVETRLFCPQPDSPATLFYLHGGGFILGNLDTHDRIMRLLASYSQCTVIGIDYTLSPEARFPQAIEEIVAACCYFHQQAEDYQINMSRIGFAGDSAGAMLALASALWLRDKQIDCGKIAGVLLWYGLYGLRDSVTRRLLGGVWDGLTQQDLQMYEEAYLSNDADRESPYYCLFNNDLTREVPPCFIAGAEFDPLLDDSRLLYQTLAAHQQPCEFKLYPGTLHAFLHYSRMMKTADEALRDGAQFFTAQL.

Positions 91-93 match the Involved in the stabilization of the negatively charged intermediate by the formation of the oxyanion hole motif; that stretch reads HGG. Active-site residues include S165, D262, and H292.

This sequence belongs to the 'GDXG' lipolytic enzyme family. In terms of assembly, homodimer. Interacts with MalT and MelA.

The protein localises to the cytoplasm. Its function is as follows. Displays esterase activity towards short chain fatty esters (acyl chain length of up to 8 carbons). Able to hydrolyze triacetylglycerol (triacetin) and tributyrylglycerol (tributyrin), but not trioleylglycerol (triolein) or cholesterol oleate. Negatively regulates MalT activity by antagonizing maltotriose binding. Inhibits MelA galactosidase activity. The chain is Acetyl esterase from Escherichia coli O9:H4 (strain HS).